Reading from the N-terminus, the 150-residue chain is D-aminoacyl-tRNA deacylase (150 aa).

The short motif at glycine 138–proline 139 is the Gly-cisPro motif, important for rejection of L-amino acids element.

Belongs to the DTD family. As to quaternary structure, homodimer.

It localises to the cytoplasm. It catalyses the reaction glycyl-tRNA(Ala) + H2O = tRNA(Ala) + glycine + H(+). The catalysed reaction is a D-aminoacyl-tRNA + H2O = a tRNA + a D-alpha-amino acid + H(+). Functionally, an aminoacyl-tRNA editing enzyme that deacylates mischarged D-aminoacyl-tRNAs. Also deacylates mischarged glycyl-tRNA(Ala), protecting cells against glycine mischarging by AlaRS. Acts via tRNA-based rather than protein-based catalysis; rejects L-amino acids rather than detecting D-amino acids in the active site. By recycling D-aminoacyl-tRNA to D-amino acids and free tRNA molecules, this enzyme counteracts the toxicity associated with the formation of D-aminoacyl-tRNA entities in vivo and helps enforce protein L-homochirality. This Thermosipho melanesiensis (strain DSM 12029 / CIP 104789 / BI429) protein is D-aminoacyl-tRNA deacylase.